The following is a 311-amino-acid chain: DNA replication terminus site-binding protein (311 aa).

Belongs to the Tus family.

The protein localises to the cytoplasm. Functionally, trans-acting protein required for termination of DNA replication. Binds to DNA replication terminator sequences (terA to terF) to prevent the passage of replication forks. The termination efficiency will be affected by the affinity of this protein for the terminator sequence. In Yersinia pseudotuberculosis serotype I (strain IP32953), this protein is DNA replication terminus site-binding protein.